Here is a 544-residue protein sequence, read N- to C-terminus: Methionine--tRNA ligase (544 aa).

The 'HIGH' region motif lies at Pro-10 to His-20. Zn(2+)-binding residues include Cys-141, Cys-144, Cys-153, and Cys-156. Positions Lys-329–Ser-333 match the 'KMSKS' region motif. Residue Thr-332 coordinates ATP.

It belongs to the class-I aminoacyl-tRNA synthetase family. MetG type 1 subfamily. In terms of assembly, monomer. It depends on Zn(2+) as a cofactor.

The protein resides in the cytoplasm. The enzyme catalyses tRNA(Met) + L-methionine + ATP = L-methionyl-tRNA(Met) + AMP + diphosphate. Its function is as follows. Is required not only for elongation of protein synthesis but also for the initiation of all mRNA translation through initiator tRNA(fMet) aminoacylation. The chain is Methionine--tRNA ligase from Bacillus cereus (strain 03BB102).